Consider the following 271-residue polypeptide: Phthiotriol/phenolphthiotriol dimycocerosates methyltransferase 1 (271 aa).

It belongs to the methyltransferase superfamily. Phthiotriol/phenolphthiotriol dimycocerosates methyltransferase family.

Catalyzes the methylation of the lipid moiety of the intermediate compounds phthiotriol and glycosylated phenolphthiotriol dimycoserosates to form phthiocerol dimycocerosates (DIM A) and glycosylated phenolphthiocerol dimycocerosates (PGL). The sequence is that of Phthiotriol/phenolphthiotriol dimycocerosates methyltransferase 1 from Mycobacterium ulcerans (strain Agy99).